Consider the following 231-residue polypeptide: MIP18 family protein YHR122W (231 aa).

Disordered regions lie at residues 1 to 26 and 75 to 100; these read MSEF…DSTK and LTSD…EEEE. An N-acetylserine modification is found at Ser2. Acidic residues predominate over residues 76 to 90; it reads TSDEDSLPAESEDES.

Belongs to the MIP18 family.

Its function is as follows. May play a role in chromosome segregation through establishment of sister chromatid cohesion. This Saccharomyces cerevisiae (strain ATCC 204508 / S288c) (Baker's yeast) protein is MIP18 family protein YHR122W.